We begin with the raw amino-acid sequence, 99 residues long: Nucleoid-associated protein SPy_1862/M5005_Spy1580 (99 aa).

The protein belongs to the YbaB/EbfC family. In terms of assembly, homodimer.

It localises to the cytoplasm. Its subcellular location is the nucleoid. Functionally, binds to DNA and alters its conformation. May be involved in regulation of gene expression, nucleoid organization and DNA protection. This is Nucleoid-associated protein SPy_1862/M5005_Spy1580 from Streptococcus pyogenes serotype M1.